Here is a 962-residue protein sequence, read N- to C-terminus: Phagocyte signaling-impaired protein (962 aa).

TPR repeat units follow at residues Leu-45–Asp-78, Asp-79–Asn-112, and Gln-523–Ser-560. The tract at residues Thr-856–Ser-880 is disordered.

The protein belongs to the MDM20/NAA25 family. In terms of assembly, component of the N-terminal acetyltransferase B (NatB) complex.

Its subcellular location is the lysosome. Functionally, non-catalytic subunit of the NatB complex which catalyzes acetylation of the N-terminal methionine residues of proteins beginning with Met-Asp or Met-Glu. Has 2 roles in the larval immune response: required both for the phagocytic degradation of internalized bacteria and for the induction of Defensin in the fat body. Within the phagocytic blood cells, has a role in detection of infection and activation of the humoral immune response. The chain is Phagocyte signaling-impaired protein from Drosophila pseudoobscura pseudoobscura (Fruit fly).